The chain runs to 574 residues: Ribonuclease Y (574 aa).

Residues 1 to 21 (MSLLDLVLLLLVLGLGGVLLL) form a helical membrane-spanning segment. Positions 264–327 (AVTVVPIPSD…EIARMALEEL (64 aa)) constitute a KH domain. Residues 390-483 (VLKHSIQVAH…VAAADALSAA (94 aa)) form the HD domain.

Belongs to the RNase Y family.

The protein localises to the cell membrane. Functionally, endoribonuclease that initiates mRNA decay. In Thermus thermophilus (strain ATCC 27634 / DSM 579 / HB8), this protein is Ribonuclease Y.